Consider the following 126-residue polypeptide: Aspartate 1-decarboxylase (126 aa).

The Schiff-base intermediate with substrate; via pyruvic acid role is filled by Ser25. Ser25 carries the post-translational modification Pyruvic acid (Ser). A substrate-binding site is contributed by Thr57. Tyr58 acts as the Proton donor in catalysis. Position 73–75 (73–75) interacts with substrate; the sequence is GGA.

Belongs to the PanD family. Heterooctamer of four alpha and four beta subunits. It depends on pyruvate as a cofactor. Post-translationally, is synthesized initially as an inactive proenzyme, which is activated by self-cleavage at a specific serine bond to produce a beta-subunit with a hydroxyl group at its C-terminus and an alpha-subunit with a pyruvoyl group at its N-terminus.

It localises to the cytoplasm. The catalysed reaction is L-aspartate + H(+) = beta-alanine + CO2. It functions in the pathway cofactor biosynthesis; (R)-pantothenate biosynthesis; beta-alanine from L-aspartate: step 1/1. Catalyzes the pyruvoyl-dependent decarboxylation of aspartate to produce beta-alanine. This chain is Aspartate 1-decarboxylase, found in Xanthomonas campestris pv. campestris (strain ATCC 33913 / DSM 3586 / NCPPB 528 / LMG 568 / P 25).